The chain runs to 203 residues: CASP-like protein 2U5 (203 aa).

Residues 1–31 (MSEHRIPVAADKQISPPISAGEQKGCKGLKR) are Cytoplasmic-facing. A helical membrane pass occupies residues 32–52 (TDLMLRFAAFVCCAVTMVVLI). The Extracellular portion of the chain corresponds to 53–84 (TDKQTSAIQVPGFNNLTITKTVSFDLAKAFVY). A glycan (N-linked (GlcNAc...) asparagine) is linked at N67. A helical membrane pass occupies residues 85-105 (LVSAAGIGAGYTLLVLVLSII). At 106 to 111 (SAERSK) the chain is on the cytoplasmic side. The chain crosses the membrane as a helical span at residues 112–132 (AIAWFIFVFDQLITYVLLAAA). Residues 133–164 (AASTEVAYMGAHAPPEASWLKVCSLFGRFCHQ) lie on the Extracellular side of the membrane. The helical transmembrane segment at 165–185 (LGASLVTSFISTVLFAFSAAI) threads the bilayer. Residues 186–203 (SAYYLFSNTNVRPAYSKG) are Cytoplasmic-facing.

Belongs to the Casparian strip membrane proteins (CASP) family. In terms of assembly, homodimer and heterodimers.

The protein localises to the cell membrane. The chain is CASP-like protein 2U5 from Selaginella moellendorffii (Spikemoss).